Consider the following 598-residue polypeptide: uncharacterized protein (598 aa).

Positions 39–322 constitute an ABC transmembrane type-1 domain; sequence LIMVFVFVTV…LSNQFNMIQM (284 aa). The next 5 membrane-spanning stretches (helical) occupy residues 40 to 60, 80 to 100, 150 to 170, 177 to 197, and 273 to 293; these read IMVF…PYLI, MLIL…QGKI, VLGN…GAVI, VILS…TQIV, and LGFA…IITV. The 235-residue stretch at 355-589 folds into the ABC transporter domain; that stretch reads IEFKNVWFSY…RGFYYELFTS (235 aa). 388-395 is an ATP binding site; sequence GPTGSGKT.

Belongs to the ABC transporter superfamily.

It is found in the cell membrane. This is an uncharacterized protein from Thermotoga maritima (strain ATCC 43589 / DSM 3109 / JCM 10099 / NBRC 100826 / MSB8).